Consider the following 282-residue polypeptide: Undecaprenyl-diphosphatase (282 aa).

Helical transmembrane passes span 40–60 (GAAF…IYFF), 85–105 (AKMG…GLLF), 117–137 (YWIS…EWLI), 158–178 (ALII…RSGV), 193–213 (AARF…IYQL), 231–251 (IVAT…LITF), and 258–278 (AVFI…IATG).

The protein belongs to the UppP family.

It is found in the cell inner membrane. The enzyme catalyses di-trans,octa-cis-undecaprenyl diphosphate + H2O = di-trans,octa-cis-undecaprenyl phosphate + phosphate + H(+). In terms of biological role, catalyzes the dephosphorylation of undecaprenyl diphosphate (UPP). Confers resistance to bacitracin. This Prosthecochloris aestuarii (strain DSM 271 / SK 413) protein is Undecaprenyl-diphosphatase.